The following is a 1029-amino-acid chain: Chitin synthase 3 (1029 aa).

Positions 1–29 are disordered; it reads MAYYSRPASAGAARAQDDQDPYPYYPDPD. The N-linked (GlcNAc...) asparagine glycan is linked to Asn37. Low complexity predominate over residues 46–71; the sequence is ASGAASSASHTSPFSDAHAASASPAS. 2 disordered regions span residues 46 to 105 and 168 to 209; these read ASGA…SRMP and LAHR…AGTS. A compositionally biased stretch (polar residues) spans 76–91; sequence SHQQVSAHAPQQQHMS. Positions 191-202 are enriched in basic and acidic residues; sequence AHDEKYAYDRPD. Residues Asn401, Asn514, Asn527, and Asn689 are each glycosylated (N-linked (GlcNAc...) asparagine). Helical transmembrane passes span 723–743, 760–780, 796–816, 830–850, 860–880, 963–983, and 998–1018; these read FYSF…YIFF, IGVF…SSFI, AAVV…VLCL, AQMV…SLLA, FLQY…YAFC, VVLA…NGDA, and VYMV…FIGS.

This sequence belongs to the chitin synthase family. Class I subfamily.

The protein localises to the cell membrane. It is found in the cytoplasmic vesicle membrane. The enzyme catalyses [(1-&gt;4)-N-acetyl-beta-D-glucosaminyl](n) + UDP-N-acetyl-alpha-D-glucosamine = [(1-&gt;4)-N-acetyl-beta-D-glucosaminyl](n+1) + UDP + H(+). In terms of biological role, polymerizes chitin, a structural polymer of the cell wall and septum, by transferring the sugar moiety of UDP-GlcNAc to the non-reducing end of the growing chitin polymer. The sequence is that of Chitin synthase 3 from Mycosarcoma maydis (Corn smut fungus).